The following is an 88-amino-acid chain: Cell division topological specificity factor (88 aa).

It belongs to the MinE family.

In terms of biological role, prevents the cell division inhibition by proteins MinC and MinD at internal division sites while permitting inhibition at polar sites. This ensures cell division at the proper site by restricting the formation of a division septum at the midpoint of the long axis of the cell. This Clostridium kluyveri (strain ATCC 8527 / DSM 555 / NBRC 12016 / NCIMB 10680 / K1) protein is Cell division topological specificity factor.